The chain runs to 473 residues: Phosphatidylserine synthase 1 (473 aa).

An N-acetylalanine modification is found at alanine 2. Over 2 to 35 (ASCVGSRTLSKDDVNYRMHFRMINEQQVEDITID) the chain is Cytoplasmic. A helical transmembrane segment spans residues 36–56 (FFYRPHTITLLSFTIISLMYF). Topologically, residues 57–72 (AFTRDDCVPEDNIWRG) are lumenal. A helical membrane pass occupies residues 73 to 93 (ILSVIFFFLIISVLAFPNGPF). Residues 94–102 (TRPHPALWR) lie on the Cytoplasmic side of the membrane. Residues 103–123 (MVFGLSVLYFLFLVFLLFLNF) traverse the membrane as a helical segment. Residues 124–186 (EQVKSLMYWL…AMKALLIRSY (63 aa)) lie on the Lumenal side of the membrane. The helical transmembrane segment at 187–207 (GLCWTISITWELTELFFMHLL) threads the bilayer. Residues 208–216 (PNFAECWWD) are Cytoplasmic-facing. Residues 217 to 237 (QVILDILLCNGGGIWLGMVVC) traverse the membrane as a helical segment. At 238-286 (RFLEMRTYHWASFKDIHTTTGKIKRAVLQFTPASWTYVRWFDPKSSFQR) the chain is on the lumenal side. A helical transmembrane segment spans residues 287 to 307 (VAGIYLFMIIWQLTELNTFFL). Over 308-319 (KHIFVFQASHPL) the chain is Cytoplasmic. Residues 320–342 (SWCRILFIGCITAPTVRQYYAYL) traverse the membrane as a helical segment. The Lumenal segment spans residues 343–355 (TDTQCKRVGTQCW). Residues 356-376 (VFGVIGFLEAIVCIKFGQDLF) form a helical membrane-spanning segment. The Cytoplasmic portion of the chain corresponds to 377–383 (SKTQILY). Residues 384–404 (VVLWLLCVAFTTFLCLYGMVW) form a helical membrane-spanning segment. Residues 405-473 (YAEHYGHREK…SKVTNGVGKK (69 aa)) lie on the Lumenal side of the membrane. Phosphoserine is present on residues serine 417, serine 425, serine 442, and serine 454. Residues 430-473 (WYHGKGSKGSEDSPPKHSNNNESHSSRRRNRHSKSKVTNGVGKK) are disordered. Residues 455–464 (SRRRNRHSKS) show a composition bias toward basic residues.

This sequence belongs to the phosphatidyl serine synthase family.

Its subcellular location is the endoplasmic reticulum membrane. It carries out the reaction a 1,2-diacyl-sn-glycero-3-phosphoethanolamine + L-serine = a 1,2-diacyl-sn-glycero-3-phospho-L-serine + ethanolamine. It catalyses the reaction a 1,2-diacyl-sn-glycero-3-phosphocholine + L-serine = a 1,2-diacyl-sn-glycero-3-phospho-L-serine + choline. Its pathway is phospholipid metabolism; phosphatidylserine biosynthesis. Functionally, catalyzes a base-exchange reaction in which the polar head group of phosphatidylethanolamine (PE) or phosphatidylcholine (PC) is replaced by L-serine. Catalyzes mainly the conversion of phosphatidylcholine but also converts, in vitro and to a lesser extent, phosphatidylethanolamine. The protein is Phosphatidylserine synthase 1 (Ptdss1) of Rattus norvegicus (Rat).